The chain runs to 698 residues: Polyribonucleotide nucleotidyltransferase (698 aa).

Positions 488 and 494 each coordinate Mg(2+). Residues 555 to 614 (PRLLTIRIDPDKIRDVIGKGGATIRALTEETGTTIDISDDGKVTIASADKAAADEARRRI) enclose the KH domain. In terms of domain architecture, S1 motif spans 624–692 (GTVYEGKVSK…RQGRIRLSMK (69 aa)).

It belongs to the polyribonucleotide nucleotidyltransferase family. As to quaternary structure, component of the RNA degradosome, which is a multiprotein complex involved in RNA processing and mRNA degradation. The cofactor is Mg(2+).

Its subcellular location is the cytoplasm. It carries out the reaction RNA(n+1) + phosphate = RNA(n) + a ribonucleoside 5'-diphosphate. Involved in mRNA degradation. Catalyzes the phosphorolysis of single-stranded polyribonucleotides processively in the 3'- to 5'-direction. This is Polyribonucleotide nucleotidyltransferase from Alkalilimnicola ehrlichii (strain ATCC BAA-1101 / DSM 17681 / MLHE-1).